Here is a 422-residue protein sequence, read N- to C-terminus: Telomerase-associated protein of 50 kDa (422 aa).

In terms of assembly, component of the telomerase holoenzyme complex, composed of the catalytic core (the catalytic subunit TERT, the telomerase RNA template component TER and TAP65/p65), which is associated with two heterotrimeric subcomplexes: (i) the replication protein A (RPA)-related subcomplex, composed of TEB1, RPA2/TEB2 and RPA3/TEB3 and (ii) the CST-like subcomplex, composed of TAP75/p75, TAP45/p45 and TAP19/p19. TEB1 and the CST-like subcomplex are tethered to the catalytic core by TAP50/p50.

It is found in the chromosome. Its subcellular location is the telomere. In terms of biological role, tethering component of the holoenzyme telomerase ribonucleoprotein (RNP) complex. Telomerase is an essential ribonucleoprotein enzyme that copies new telomeric repeats onto chromosome ends by repetitively synthesizing the short telomere-repeat sequence 5'-TTGGGG-3' using an RNA template component TER. In the telomerase holoenzyme complex, acts as a hub that anchors the two heterotrimeric subcomplexes with the catalytic core. The polypeptide is Telomerase-associated protein of 50 kDa (Tetrahymena thermophila (strain SB210)).